A 522-amino-acid polypeptide reads, in one-letter code: WEB family protein At2g38370 (522 aa).

Residues 1–32 (MAEFPEPGTVNPDSDLSNGRAEKPEIDTSAPF) form a disordered region. Coiled coils occupy residues 77–264 (ELQR…AARE) and 299–376 (ARSA…RSEN). Disordered regions lie at residues 374–397 (SENG…SRRE) and 458–493 (MSLG…RKRK). Positions 473–486 (TVSKRSEGKENEKR) are enriched in basic and acidic residues.

It belongs to the WEB family.

The sequence is that of WEB family protein At2g38370 from Arabidopsis thaliana (Mouse-ear cress).